Consider the following 444-residue polypeptide: ATP-dependent protease ATPase subunit HslU (444 aa).

ATP is bound by residues Ile-18 and Gly-60–Glu-65. The disordered stretch occupies residues Asp-141–Lys-161. Over residues Glu-147 to Gln-157 the composition is skewed to polar residues. Residues Asp-257, Glu-322, and Arg-394 each coordinate ATP.

Belongs to the ClpX chaperone family. HslU subfamily. In terms of assembly, a double ring-shaped homohexamer of HslV is capped on each side by a ring-shaped HslU homohexamer. The assembly of the HslU/HslV complex is dependent on binding of ATP.

It localises to the cytoplasm. In terms of biological role, ATPase subunit of a proteasome-like degradation complex; this subunit has chaperone activity. The binding of ATP and its subsequent hydrolysis by HslU are essential for unfolding of protein substrates subsequently hydrolyzed by HslV. HslU recognizes the N-terminal part of its protein substrates and unfolds these before they are guided to HslV for hydrolysis. The sequence is that of ATP-dependent protease ATPase subunit HslU from Aliivibrio fischeri (strain ATCC 700601 / ES114) (Vibrio fischeri).